The primary structure comprises 446 residues: Methionine aminopeptidase 2 (446 aa).

Residues 1–85 (MAGVTEGEDT…KNKKKKKKKI (85 aa)) are disordered. Residues 8–32 (EDTKVIESKINELNIDKPKLEDNNE) are compositionally biased toward basic and acidic residues. Acidic residues predominate over residues 42–58 (SGDDDDDDKEEDDDNEI). Basic residues predominate over residues 73 to 85 (KKNKNKKKKKKKI). Position 197 (H197) interacts with substrate. 3 residues coordinate a divalent metal cation: D217, D228, and H299. Substrate is bound at residue H307. A divalent metal cation is bound by residues E332 and E427.

It belongs to the peptidase M24A family. Methionine aminopeptidase eukaryotic type 2 subfamily. Co(2+) serves as cofactor. The cofactor is Zn(2+). Requires Mn(2+) as cofactor. It depends on Fe(2+) as a cofactor.

It is found in the cytoplasm. The enzyme catalyses Release of N-terminal amino acids, preferentially methionine, from peptides and arylamides.. Functionally, cotranslationally removes the N-terminal methionine from nascent proteins. The N-terminal methionine is often cleaved when the second residue in the primary sequence is small and uncharged (Met-Ala-, Cys, Gly, Pro, Ser, Thr, or Val). The sequence is that of Methionine aminopeptidase 2 from Candida albicans (strain SC5314 / ATCC MYA-2876) (Yeast).